We begin with the raw amino-acid sequence, 87 residues long: Large ribosomal subunit protein bL27 (87 aa).

This sequence belongs to the bacterial ribosomal protein bL27 family.

The protein is Large ribosomal subunit protein bL27 of Paenarthrobacter aurescens (strain TC1).